The chain runs to 220 residues: Fibroblast growth factor 3 (220 aa).

The N-terminal stretch at 1–19 (MLVIWLLLLALLPEPRVPA) is a signal peptide. Residues 19 to 40 (AATASPRAPRDAGGRGGVYEHL) form a disordered region. The N-linked (GlcNAc...) asparagine glycan is linked to Asn-66.

Belongs to the heparin-binding growth factors family.

It localises to the secreted. Functionally, plays an important role in the regulation of embryonic development, cell proliferation, and cell differentiation. This chain is Fibroblast growth factor 3 (FGF3), found in Gallus gallus (Chicken).